The following is a 289-amino-acid chain: Acetyl-coenzyme A carboxylase carboxyl transferase subunit beta (289 aa).

Residues 28–289 (VMTKCPKCKK…QGGEMAVWQS (262 aa)) enclose the CoA carboxyltransferase N-terminal domain. The Zn(2+) site is built by cysteine 32, cysteine 35, cysteine 51, and cysteine 54. The C4-type zinc-finger motif lies at 32–54 (CPKCKKIMYTKELLKNLKVCVNC).

Belongs to the AccD/PCCB family. In terms of assembly, acetyl-CoA carboxylase is a heterohexamer composed of biotin carboxyl carrier protein (AccB), biotin carboxylase (AccC) and two subunits each of ACCase subunit alpha (AccA) and ACCase subunit beta (AccD). The cofactor is Zn(2+).

The protein localises to the cytoplasm. The catalysed reaction is N(6)-carboxybiotinyl-L-lysyl-[protein] + acetyl-CoA = N(6)-biotinyl-L-lysyl-[protein] + malonyl-CoA. The protein operates within lipid metabolism; malonyl-CoA biosynthesis; malonyl-CoA from acetyl-CoA: step 1/1. Component of the acetyl coenzyme A carboxylase (ACC) complex. Biotin carboxylase (BC) catalyzes the carboxylation of biotin on its carrier protein (BCCP) and then the CO(2) group is transferred by the transcarboxylase to acetyl-CoA to form malonyl-CoA. This Bacillus cereus (strain ATCC 10987 / NRS 248) protein is Acetyl-coenzyme A carboxylase carboxyl transferase subunit beta.